A 131-amino-acid chain; its full sequence is Photosystem II reaction center Psb28 protein (131 aa).

Positions Asn110–Ala131 are disordered. Residues Leu112–Ala125 are compositionally biased toward polar residues.

It belongs to the Psb28 family. Part of the photosystem II complex.

Its subcellular location is the cellular thylakoid membrane. The protein is Photosystem II reaction center Psb28 protein of Synechococcus sp. (strain CC9902).